Here is a 1407-residue protein sequence, read N- to C-terminus: Probable phosphoribosylformylglycinamidine synthase, chloroplastic/mitochondrial (1407 aa).

A chloroplast and mitochondrion-targeting transit peptide spans 1–53; it reads MNTSQATRAALFLNGSNRQAMLLQRSSMSQLWGSVRMRTSRLSLNRTKAVSLR. Residues 407–418, 487–489, and Ala786 each bind ATP; these read GAETGAGGRIRD and QGY. Positions 787, 826, 830, and 989 each coordinate Mg(2+). Ser991 lines the ATP pocket. A Glutamine amidotransferase type-1 domain is found at 1141–1381; that stretch reads KVAVIREEGS…LMWQFPWYPT (241 aa). The Nucleophile role is filled by Cys1235. Catalysis depends on residues His1366 and Glu1368.

This sequence in the N-terminal section; belongs to the FGAMS family.

The protein resides in the plastid. Its subcellular location is the chloroplast. It localises to the mitochondrion. It carries out the reaction N(2)-formyl-N(1)-(5-phospho-beta-D-ribosyl)glycinamide + L-glutamine + ATP + H2O = 2-formamido-N(1)-(5-O-phospho-beta-D-ribosyl)acetamidine + L-glutamate + ADP + phosphate + H(+). It participates in purine metabolism; IMP biosynthesis via de novo pathway; 5-amino-1-(5-phospho-D-ribosyl)imidazole from N(2)-formyl-N(1)-(5-phospho-D-ribosyl)glycinamide: step 1/2. Functionally, essential to the male gametophyte development. Phosphoribosylformylglycinamidine synthase involved in the purines biosynthetic pathway. Catalyzes the ATP-dependent conversion of formylglycinamide ribonucleotide (FGAR) and glutamine to yield formylglycinamidine ribonucleotide (FGAM) and glutamate. The chain is Probable phosphoribosylformylglycinamidine synthase, chloroplastic/mitochondrial from Arabidopsis thaliana (Mouse-ear cress).